The sequence spans 100 residues: MTKVTREEVEHIAHLARLQISEEETEEMANTLESILDFAKQNDTADTEGIEPTYHVLDLQNVLRDDEAIEGIPQELALKNAKETENGQFKVPAIMNEEEA.

The protein belongs to the GatC family. In terms of assembly, heterotrimer of A, B and C subunits.

It carries out the reaction L-glutamyl-tRNA(Gln) + L-glutamine + ATP + H2O = L-glutaminyl-tRNA(Gln) + L-glutamate + ADP + phosphate + H(+). The enzyme catalyses L-aspartyl-tRNA(Asn) + L-glutamine + ATP + H2O = L-asparaginyl-tRNA(Asn) + L-glutamate + ADP + phosphate + 2 H(+). Allows the formation of correctly charged Asn-tRNA(Asn) or Gln-tRNA(Gln) through the transamidation of misacylated Asp-tRNA(Asn) or Glu-tRNA(Gln) in organisms which lack either or both of asparaginyl-tRNA or glutaminyl-tRNA synthetases. The reaction takes place in the presence of glutamine and ATP through an activated phospho-Asp-tRNA(Asn) or phospho-Glu-tRNA(Gln). In Staphylococcus haemolyticus (strain JCSC1435), this protein is Aspartyl/glutamyl-tRNA(Asn/Gln) amidotransferase subunit C.